An 80-amino-acid chain; its full sequence is Defensin-like protein 51 (80 aa).

The first 27 residues, 1–27 (MGFTKILVTFFLVGLLVISSSPQNAIA), serve as a signal peptide directing secretion. 4 disulfide bridges follow: cysteine 39-cysteine 79, cysteine 43-cysteine 66, cysteine 52-cysteine 77, and cysteine 56-cysteine 78.

This sequence belongs to the DEFL family.

It localises to the secreted. This is Defensin-like protein 51 (LCR48) from Arabidopsis thaliana (Mouse-ear cress).